Here is a 266-residue protein sequence, read N- to C-terminus: Interleukin-1 beta (266 aa).

Residues 1-114 constitute a propeptide that is removed on maturation; that stretch reads MAAVPELTSE…KTDADNFMSD (114 aa).

This sequence belongs to the IL-1 family. In terms of assembly, monomer. In its precursor form, weakly interacts with full-length MEFV; the mature cytokine does not interact at all. Interacts with integrins ITGAV:ITGBV and ITGA5:ITGB1; integrin-binding is required for IL1B signaling. Interacts with cargo receptor TMED10; the interaction is direct and is required for the secretion of IL1B mature form. Interacts with HSP90AB1; the interaction facilitates cargo translocation into the ERGIC. Interacts with HSP90B1; the interaction facilitates cargo translocation into the ERGIC.

It localises to the cytoplasm. Its subcellular location is the cytosol. The protein resides in the secreted. It is found in the lysosome. The protein localises to the extracellular exosome. Its function is as follows. Potent pro-inflammatory cytokine. Initially discovered as the major endogenous pyrogen, induces prostaglandin synthesis, neutrophil influx and activation, T-cell activation and cytokine production, B-cell activation and antibody production, and fibroblast proliferation and collagen production. Promotes Th17 differentiation of T-cells. Synergizes with IL12/interleukin-12 to induce IFNG synthesis from T-helper 1 (Th1) cells. Plays a role in angiogenesis by inducing VEGF production synergistically with TNF and IL6. Involved in transduction of inflammation downstream of pyroptosis: its mature form is specifically released in the extracellular milieu by passing through the gasdermin-D (GSDMD) pore. The chain is Interleukin-1 beta (IL1B) from Canis lupus familiaris (Dog).